We begin with the raw amino-acid sequence, 274 residues long: Glucosamine-6-phosphate deaminase (274 aa).

Residue aspartate 72 is the Proton acceptor; for enolization step of the active site. Aspartate 141 functions as the For ring-opening step in the catalytic mechanism. Histidine 143 acts as the Proton acceptor; for ring-opening step in catalysis. Glutamate 148 functions as the For ring-opening step in the catalytic mechanism.

The protein belongs to the glucosamine/galactosamine-6-phosphate isomerase family. Homohexamer.

The protein localises to the cytoplasm. It carries out the reaction alpha-D-glucosamine 6-phosphate + H2O = beta-D-fructose 6-phosphate + NH4(+). It participates in nucleotide-sugar biosynthesis; UDP-N-acetyl-alpha-D-glucosamine biosynthesis; alpha-D-glucosamine 6-phosphate from D-fructose 6-phosphate: step 1/1. Catalyzes the reversible conversion of alpha-D-glucosamine 6-phosphate (GlcN-6P) into beta-D-fructose 6-phosphate (Fru-6P) and ammonium ion, a regulatory reaction step in de novo uridine diphosphate-N-acetyl-alpha-D-glucosamine (UDP-GlcNAc) biosynthesis via hexosamine pathway. The sequence is that of Glucosamine-6-phosphate deaminase from Drosophila pseudoobscura pseudoobscura (Fruit fly).